We begin with the raw amino-acid sequence, 138 residues long: Superoxide dismutase [Mn] (138 aa).

Mn(2+) is bound by residues serine 1, histidine 49, aspartate 133, and histidine 137.

The protein belongs to the iron/manganese superoxide dismutase family. Mn(2+) serves as cofactor.

The catalysed reaction is 2 superoxide + 2 H(+) = H2O2 + O2. Functionally, destroys superoxide anion radicals which are normally produced within the cells and which are toxic to biological systems. This Mycobacterium marinum protein is Superoxide dismutase [Mn] (sodA).